The sequence spans 585 residues: Aspartate--tRNA ligase (585 aa).

Residue Glu173 participates in L-aspartate binding. The aspartate stretch occupies residues 197-200 (QTLK). Arg219 is an L-aspartate binding site. ATP-binding positions include 219-221 (RDE) and Gln228. His446 is an L-aspartate binding site. Residue Glu480 participates in ATP binding. Residue Arg487 participates in L-aspartate binding. 532-535 (GLDR) lines the ATP pocket.

Belongs to the class-II aminoacyl-tRNA synthetase family. Type 1 subfamily. Homodimer.

The protein localises to the cytoplasm. The catalysed reaction is tRNA(Asp) + L-aspartate + ATP = L-aspartyl-tRNA(Asp) + AMP + diphosphate. Catalyzes the attachment of L-aspartate to tRNA(Asp) in a two-step reaction: L-aspartate is first activated by ATP to form Asp-AMP and then transferred to the acceptor end of tRNA(Asp). The protein is Aspartate--tRNA ligase of Parabacteroides distasonis (strain ATCC 8503 / DSM 20701 / CIP 104284 / JCM 5825 / NCTC 11152).